The following is a 602-amino-acid chain: Wings apart-like protein homolog 1 (602 aa).

The segment at 34–66 (NKQKRSPGQTVSKRLHKKQRVVSNPDLSLPSSP) is disordered. Polar residues predominate over residues 54-66 (VVSNPDLSLPSSP). The region spanning 160–492 (IQMKSIHELR…LGLVEESHEF (333 aa)) is the WAPL domain.

The protein belongs to the WAPL family.

It localises to the nucleus. The protein resides in the chromosome. In terms of biological role, regulator of sister chromatid cohesion in mitosis which negatively regulates cohesin association with chromatin. The protein is Wings apart-like protein homolog 1 (wpl1) of Schizosaccharomyces pombe (strain 972 / ATCC 24843) (Fission yeast).